A 337-amino-acid polypeptide reads, in one-letter code: Monoacylglycerol lipase ABHD6 (337 aa).

Residues 1–8 (MDLDVVNM) are Extracellular-facing. Residues 9–29 (FVIAGGTLAIPILAFVASFLL) traverse the membrane as a helical; Signal-anchor for type II membrane protein segment. At 30 to 337 (WPSALIRIYY…HNPDNNKKLN (308 aa)) the chain is on the cytoplasmic side. Ser-148 serves as the catalytic Nucleophile. Residues Asp-278 and His-306 each act as charge relay system in the active site.

This sequence belongs to the AB hydrolase superfamily.

Its subcellular location is the late endosome membrane. It is found in the lysosome membrane. The protein localises to the mitochondrion membrane. The enzyme catalyses Hydrolyzes glycerol monoesters of long-chain fatty acids.. It catalyses the reaction 1-octanoylglycerol + H2O = octanoate + glycerol + H(+). It carries out the reaction 1-decanoylglycerol + H2O = decanoate + glycerol + H(+). The catalysed reaction is 1-dodecanoylglycerol + H2O = dodecanoate + glycerol + H(+). The enzyme catalyses 1-tetradecanoylglycerol + H2O = tetradecanoate + glycerol + H(+). It catalyses the reaction 2-hexadecanoylglycerol + H2O = glycerol + hexadecanoate + H(+). It carries out the reaction 2-(9Z-octadecenoyl)-glycerol + H2O = glycerol + (9Z)-octadecenoate + H(+). The catalysed reaction is 1-(9Z-octadecenoyl)-glycerol + H2O = glycerol + (9Z)-octadecenoate + H(+). The enzyme catalyses 2-(9Z,12Z-octadecadienoyl)-glycerol + H2O = (9Z,12Z)-octadecadienoate + glycerol + H(+). It catalyses the reaction 2-(5Z,8Z,11Z,14Z-eicosatetraenoyl)-glycerol + H2O = glycerol + (5Z,8Z,11Z,14Z)-eicosatetraenoate + H(+). It carries out the reaction 1-(5Z,8Z,11Z,14Z-eicosatetraenoyl)-glycerol + H2O = glycerol + (5Z,8Z,11Z,14Z)-eicosatetraenoate + H(+). The catalysed reaction is 1-(9Z,12Z-octadecadienoyl)-glycerol + H2O = (9Z,12Z)-octadecadienoate + glycerol + H(+). The enzyme catalyses 3-(9Z-octadecenoyl)-sn-glycero-1-phospho-(3'-(9Z-octadecenoyl)-1'-sn-glycerol) + H2O = 3-(9Z-octadecenoyl)-sn-glycero-1-phospho-(1'-sn-glycerol) + (9Z)-octadecenoate + H(+). It catalyses the reaction (S,S)-2-(9Z-octadecenoyl)-sn-glycero-1-phospho-(2'-(9Z-octadecenoyl)-1'-sn-glycerol) + H2O = (S,S)-2-(9Z-octadecenoyl)-sn-glycero-1-phospho-(1'-sn-glycerol) + (9Z)-octadecenoate + H(+). It carries out the reaction (R,R)-2-(9Z-octadecenoyl)-sn-glycero-3-phospho-(2'-(9Z-octadecenoyl)-3'-sn-glycerol) + H2O = (R,R)-2-(9Z-octadecenoyl)-sn-glycero-3-phospho-(3'-sn-glycerol) + (9Z)-octadecenoate + H(+). Lipase that preferentially hydrolysis medium-chain saturated monoacylglycerols including 2-arachidonoylglycerol. Through 2-arachidonoylglycerol degradation may regulate endocannabinoid signaling pathways. Also has a lysophosphatidyl lipase activity with a preference for lysophosphatidylglycerol among other lysophospholipids. Also able to degrade bis(monoacylglycero)phosphate (BMP) and constitutes the major enzyme for BMP catabolism. BMP, also known as lysobisphosphatidic acid, is enriched in late endosomes and lysosomes and plays a key role in the formation of intraluminal vesicles and in lipid sorting. This is Monoacylglycerol lipase ABHD6 from Rattus norvegicus (Rat).